We begin with the raw amino-acid sequence, 234 residues long: Synaptogyrin-4 (234 aa).

The 152-residue stretch at 18–169 folds into the MARVEL domain; the sequence is FLKRPKAITR…QAYLAFQELR (152 aa). 4 consecutive transmembrane segments (helical) span residues 25–45, 66–86, 104–124, and 145–165; these read ITRIFAGVFSLIVFSSLLTDG, CSIAVGAGLLAFLSSLAFLAL, LLDLILAVIWAGVWAVGFCFL, and AAITFSFFSILVWIFQAYLAF. The interval 191–226 is disordered; the sequence is SPPSAASPVNTPTTGPHGPSYASSSLSPYLSTPKAP. The span at 209–221 shows a compositional bias: low complexity; the sequence is PSYASSSLSPYLS.

It belongs to the synaptogyrin family.

It localises to the membrane. This is Synaptogyrin-4 (SYNGR4) from Bos taurus (Bovine).